The sequence spans 189 residues: Nuclear distribution protein nudE homolog 1 (189 aa).

Residues N4–S121 are a coiled coil. The span at V114–R126 shows a compositional bias: basic and acidic residues. Residues V114–K139 are disordered.

This sequence belongs to the nudE family. Self-associates. Interacts with PAC1.

The protein localises to the nucleus. It is found in the cytoplasm. Its subcellular location is the cytoskeleton. In terms of biological role, required for nuclear migration to the bud neck during cell division. Targets cytoplasmic dynein to microtubule plus ends thereby promoting dynein-mediated microtubule sliding along the bud cortex and consequently the movement of the mitotic spindle to the bud neck. In Saccharomyces cerevisiae (strain ATCC 204508 / S288c) (Baker's yeast), this protein is Nuclear distribution protein nudE homolog 1 (NDL1).